Here is a 132-residue protein sequence, read N- to C-terminus: Fatty acid-binding protein type 2 (132 aa).

Ala-2 bears the N-acetylalanine mark.

Belongs to the calycin superfamily. Fatty-acid binding protein (FABP) family.

The polypeptide is Fatty acid-binding protein type 2 (Fasciola hepatica (Liver fluke)).